A 472-amino-acid polypeptide reads, in one-letter code: MAPIIHKNLTAPELVEWALKLEKDSQLTARGALSVRSYAKTGRSPRDKRIVNTTDVTDNVDWGSVNMKLTEESFEKLKTIAKDYFATCKHLFVMDCFAGHDERYRLKVRVYTTRPYHALFMRNMLIVPTLEELQSFGEPDYVIYNAGEAKADPTVPGVTSTTSVALNFKTREQVILGTEYAGEMKKGILTVMFELMPRMGHLCMHASANVGKSGDVTVFFGLSGTGKTTLSADPRRNLIGDDEHVWTDRGVFNIEGGCYAKAIGLNPETEKDIYEAVRFGAVAENCTLDRRTHEIDFNDESICKNTRVAYPLMHIDGALSKAVAGHPKNIIFLTNDAFGVMPPVARLTSAQAMFWFVMGYTANVPGVEAGSARVARPIFSSCFGGPFLVRHATHYGQQLAEKMEKHNSRVWLLNTGYAGGRADRGAKRMPLRVTRAIIDAIHDGTLDQADYEVYPGWAFTFLRGLRTCPQAC.

ATP is bound at residue 221–228 (GLSGTGKT).

The protein belongs to the phosphoenolpyruvate carboxykinase (ATP) family. In terms of assembly, homodimer.

It is found in the glycosome. It carries out the reaction oxaloacetate + ATP = phosphoenolpyruvate + ADP + CO2. It functions in the pathway carbohydrate biosynthesis; gluconeogenesis. Its function is as follows. P60 has the capability to bind to microtubules and membrane vesicles in vitro. This is Phosphoenolpyruvate carboxykinase (ATP), glycosomal from Trypanosoma brucei brucei.